We begin with the raw amino-acid sequence, 79 residues long: ESX secretion system protein YukD (79 aa).

This sequence belongs to the EsaB family.

Functionally, required for YukE secretion. Probable component or regulator of the ESX/ESAT-6-like secretion system (BsEss). The sequence is that of ESX secretion system protein YukD (yukD) from Bacillus subtilis (strain 168).